The sequence spans 138 residues: ATP synthase epsilon chain (138 aa).

The protein belongs to the ATPase epsilon chain family. F-type ATPases have 2 components, CF(1) - the catalytic core - and CF(0) - the membrane proton channel. CF(1) has five subunits: alpha(3), beta(3), gamma(1), delta(1), epsilon(1). CF(0) has three main subunits: a, b and c.

Its subcellular location is the cell membrane. Functionally, produces ATP from ADP in the presence of a proton gradient across the membrane. The polypeptide is ATP synthase epsilon chain (Streptococcus pyogenes serotype M3 (strain ATCC BAA-595 / MGAS315)).